Consider the following 120-residue polypeptide: Large ribosomal subunit protein bL12 (120 aa).

This sequence belongs to the bacterial ribosomal protein bL12 family. As to quaternary structure, homodimer. Part of the ribosomal stalk of the 50S ribosomal subunit. Forms a multimeric L10(L12)X complex, where L10 forms an elongated spine to which 2 to 4 L12 dimers bind in a sequential fashion. Binds GTP-bound translation factors.

Functionally, forms part of the ribosomal stalk which helps the ribosome interact with GTP-bound translation factors. Is thus essential for accurate translation. The sequence is that of Large ribosomal subunit protein bL12 from Haemophilus ducreyi (strain 35000HP / ATCC 700724).